A 235-amino-acid chain; its full sequence is UPF0173 metal-dependent hydrolase Oant_3663 (235 aa).

Belongs to the UPF0173 family.

The protein is UPF0173 metal-dependent hydrolase Oant_3663 of Brucella anthropi (strain ATCC 49188 / DSM 6882 / CCUG 24695 / JCM 21032 / LMG 3331 / NBRC 15819 / NCTC 12168 / Alc 37) (Ochrobactrum anthropi).